The primary structure comprises 319 residues: 4-hydroxy-3-methylbut-2-enyl diphosphate reductase (319 aa).

Residue cysteine 12 participates in [4Fe-4S] cluster binding. The (2E)-4-hydroxy-3-methylbut-2-enyl diphosphate site is built by histidine 41 and histidine 74. Residues histidine 41 and histidine 74 each coordinate dimethylallyl diphosphate. Histidine 41 and histidine 74 together coordinate isopentenyl diphosphate. Position 96 (cysteine 96) interacts with [4Fe-4S] cluster. (2E)-4-hydroxy-3-methylbut-2-enyl diphosphate is bound at residue histidine 124. Histidine 124 serves as a coordination point for dimethylallyl diphosphate. Histidine 124 contacts isopentenyl diphosphate. Glutamate 126 acts as the Proton donor in catalysis. Residue threonine 167 coordinates (2E)-4-hydroxy-3-methylbut-2-enyl diphosphate. Cysteine 197 is a binding site for [4Fe-4S] cluster. Residues serine 225, serine 226, asparagine 227, and serine 269 each coordinate (2E)-4-hydroxy-3-methylbut-2-enyl diphosphate. Positions 225, 226, 227, and 269 each coordinate dimethylallyl diphosphate. The isopentenyl diphosphate site is built by serine 225, serine 226, asparagine 227, and serine 269.

The protein belongs to the IspH family. Homodimer. Requires [4Fe-4S] cluster as cofactor.

The catalysed reaction is isopentenyl diphosphate + 2 oxidized [2Fe-2S]-[ferredoxin] + H2O = (2E)-4-hydroxy-3-methylbut-2-enyl diphosphate + 2 reduced [2Fe-2S]-[ferredoxin] + 2 H(+). It carries out the reaction dimethylallyl diphosphate + 2 oxidized [2Fe-2S]-[ferredoxin] + H2O = (2E)-4-hydroxy-3-methylbut-2-enyl diphosphate + 2 reduced [2Fe-2S]-[ferredoxin] + 2 H(+). It functions in the pathway isoprenoid biosynthesis; dimethylallyl diphosphate biosynthesis; dimethylallyl diphosphate from (2E)-4-hydroxy-3-methylbutenyl diphosphate: step 1/1. The protein operates within isoprenoid biosynthesis; isopentenyl diphosphate biosynthesis via DXP pathway; isopentenyl diphosphate from 1-deoxy-D-xylulose 5-phosphate: step 6/6. In terms of biological role, catalyzes the conversion of 1-hydroxy-2-methyl-2-(E)-butenyl 4-diphosphate (HMBPP) into a mixture of isopentenyl diphosphate (IPP) and dimethylallyl diphosphate (DMAPP). Acts in the terminal step of the DOXP/MEP pathway for isoprenoid precursor biosynthesis. The chain is 4-hydroxy-3-methylbut-2-enyl diphosphate reductase from Buchnera aphidicola subsp. Acyrthosiphon pisum (strain Tuc7).